The primary structure comprises 53 residues: Mannose/glucose-specific lectin alpha 1 chain (53 aa).

Belongs to the leguminous lectin family. In terms of assembly, tetramer of two alpha and two beta chains.

This is Mannose/glucose-specific lectin alpha 1 chain from Lathyrus ochrus (Cyprus-vetch).